Consider the following 262-residue polypeptide: Small ribosomal subunit protein uS2 (262 aa).

Residues 224–262 form a disordered region; sequence GKQGQDDAQQETADDNAANETVSEDSLKNLKNSVEGKED.

The protein belongs to the universal ribosomal protein uS2 family.

In Limosilactobacillus reuteri (strain DSM 20016) (Lactobacillus reuteri), this protein is Small ribosomal subunit protein uS2.